Here is a 347-residue protein sequence, read N- to C-terminus: CCN family member 2 (347 aa).

The first 24 residues, 1-24, serve as a signal peptide directing secretion; the sequence is MLASVAGPVSLALVLLLCTRPATG. Residues 25 to 96 enclose the IGFBP N-terminal domain; the sequence is QDCSAQCQCA…NRKIGVCTAK (72 aa). Intrachain disulfides connect Cys27–Cys52, Cys31–Cys54, Cys33–Cys55, Cys41–Cys58, Cys66–Cys80, and Cys72–Cys93. Positions 99–165 constitute a VWFC domain; sequence APCVFGGSVY…GKCCEEWVCD (67 aa). Residues 196–241 form the TSP type-1 domain; that stretch reads NCLVQTTEWSACSKTCGMGISTRVTNDNTFCRLEKQSRLCMVRPCE. Residues 245–347 form a heparin-binding region; the sequence is EENIKKGKKC…YYRKMYGDMA (103 aa). Cystine bridges form between Cys254-Cys291, Cys271-Cys305, Cys282-Cys321, Cys285-Cys323, and Cys290-Cys327. Positions 254–328 constitute a CTCK domain; that stretch reads CIRTPKIAKP…KTCACHYNCP (75 aa).

This sequence belongs to the CCN family. In terms of assembly, monomer. Interacts with TSKU.

The protein localises to the secreted. The protein resides in the extracellular space. It is found in the extracellular matrix. Its function is as follows. Major connective tissue mitoattractant secreted by vascular endothelial cells. Promotes proliferation and differentiation of chondrocytes. Is involved in the stimulation of osteoblast differentiation and has a critical role in osteogenesis. Mediates heparin- and divalent cation-dependent cell adhesion in many cell types including fibroblasts, myofibroblasts, endothelial and epithelial cells. Enhances fibroblast growth factor-induced DNA synthesis. In Rattus norvegicus (Rat), this protein is CCN family member 2.